We begin with the raw amino-acid sequence, 380 residues long: Small ribosomal subunit protein uS3m (380 aa).

Belongs to the universal ribosomal protein uS3 family.

Its subcellular location is the mitochondrion. Essential for mitochondrial protein synthesis and required for the maturation of small ribosomal subunits. The chain is Small ribosomal subunit protein uS3m (VAR1) from Cyberlindnera mrakii (Yeast).